The primary structure comprises 127 residues: PanD regulatory factor (127 aa).

Residues 1–127 (MKLTILRLEH…TAQHDGWEKR (127 aa)) form the N-acetyltransferase domain. Residues 66 to 68 (LRV) and 72 to 79 (TRRRGVGQ) contribute to the CoA site.

Belongs to the PanZ/PanM family. Interacts with PanD in the presence of CoA. Monomer.

Controls both the activation and catalytic activity of PanD in a coenzyme A (CoA)-dependent fashion. Binding of CoA or a derivative to PanM leads to interaction with PanD, which promotes the processing and activation of pro-PanD, and subsequent substrate-mediated inhibition of the active form of PanD. Lacks acetyltransferase activity. The polypeptide is PanD regulatory factor (Salmonella typhimurium (strain LT2 / SGSC1412 / ATCC 700720)).